We begin with the raw amino-acid sequence, 638 residues long: Epithelial sodium channel subunit delta (638 aa).

Residues 1–13 (MAEHRSMDGRMEA) show a composition bias toward basic and acidic residues. The interval 1–47 (MAEHRSMDGRMEAATRGGSHLQAAAQTPPRPGPPSAPPPPPKEGHQE) is disordered. Residues 1 to 86 (MAEHRSMDGR…CSRGNRLKTT (86 aa)) are Cytoplasmic-facing. A compositionally biased stretch (pro residues) spans 28 to 41 (PPRPGPPSAPPPPP). A helical membrane pass occupies residues 87 to 107 (SWGLLSLGALVALCWQLGLLF). Residues 108–530 (ERHWHRPVLM…VPQLLSAMGS (423 aa)) lie on the Extracellular side of the membrane. Residues N166 and N384 are each glycosylated (N-linked (GlcNAc...) asparagine). Residues 531 to 551 (LCSLWFGASVLSLLELLELLL) form a helical membrane-spanning segment. The Cytoplasmic portion of the chain corresponds to 552-638 (DASALTLVLG…GPQPLETLDT (87 aa)). The tract at residues 574–613 (RASPASGASSIKPEASQMPTPAGGTSDDPEPSGPHLPRVM) is disordered.

This sequence belongs to the amiloride-sensitive sodium channel (TC 1.A.6) family. SCNN1D subfamily. As to quaternary structure, can form an alternative heterotrimeric epithelial sodium channel (ENaC), composed of a delta (SCNN1D), beta (SCNN1B), and gamma (SCNN1G) subunit, where the delta (SCNN1D) subunit replaces the alpha (SCNN1A) subunit.

It localises to the apical cell membrane. It catalyses the reaction Na(+)(in) = Na(+)(out). With respect to regulation, originally identified and characterized by its inhibition by the diuretic drug amiloride. Its function is as follows. Potential alternative pore-forming subunit of the epithelial sodium channel (ENaC), capable of replacing the alpha/SCNN1A subunit, creating a more active channel with distinct properties. ENaC functions in epithelial tissues, where it facilitates the electrodiffusion of sodium ions from the extracellular fluid through the apical membrane of cells, with water following osmotically, regulating sodium balance and fluid homeostasis. This subunit could also function independently as a sodium channel or assemble into other tissue-specific heterotrimeric sodium channels. The chain is Epithelial sodium channel subunit delta from Pan troglodytes (Chimpanzee).